Consider the following 792-residue polypeptide: Lon protease (792 aa).

The Lon N-terminal domain occupies 16-208 (LPILPLRETV…KVTYYLTREL (193 aa)). ATP is bound at residue 360–367 (GPPGVGKT). Residues 597-778 (KDEVGVATGL…DEVLNLALLE (182 aa)) form the Lon proteolytic domain. Catalysis depends on residues Ser-684 and Lys-727.

The protein belongs to the peptidase S16 family. In terms of assembly, homohexamer. Organized in a ring with a central cavity.

It localises to the cytoplasm. It catalyses the reaction Hydrolysis of proteins in presence of ATP.. ATP-dependent serine protease that mediates the selective degradation of mutant and abnormal proteins as well as certain short-lived regulatory proteins. Required for cellular homeostasis and for survival from DNA damage and developmental changes induced by stress. Degrades polypeptides processively to yield small peptide fragments that are 5 to 10 amino acids long. Binds to DNA in a double-stranded, site-specific manner. This Dictyoglomus thermophilum (strain ATCC 35947 / DSM 3960 / H-6-12) protein is Lon protease.